Here is a 197-residue protein sequence, read N- to C-terminus: Imidazoleglycerol-phosphate dehydratase (197 aa).

This sequence belongs to the imidazoleglycerol-phosphate dehydratase family.

It is found in the cytoplasm. It catalyses the reaction D-erythro-1-(imidazol-4-yl)glycerol 3-phosphate = 3-(imidazol-4-yl)-2-oxopropyl phosphate + H2O. The protein operates within amino-acid biosynthesis; L-histidine biosynthesis; L-histidine from 5-phospho-alpha-D-ribose 1-diphosphate: step 6/9. The polypeptide is Imidazoleglycerol-phosphate dehydratase (Syntrophomonas wolfei subsp. wolfei (strain DSM 2245B / Goettingen)).